Reading from the N-terminus, the 56-residue chain is Photosystem II assembly protein Psb34 (56 aa).

Over 1 to 33 (MRYTTDEGGRLNNFAIEPKVYQAQPWTPQQKVR) the chain is Cytoplasmic. Residues 34 to 54 (AALLVGGGLLLVAGLVAIAVG) form a helical membrane-spanning segment. Residues 55–56 (VS) lie on the Extracellular side of the membrane.

In terms of assembly, part of photosystem II (PSII) assembly intermediate complex PSII-I; crystallized from a strain without psbJ, it forms monomeric PSII before addition of the oxygen evolving complex. PSII-I includes 3 assembly factors not found in mature PSII (Psb27, Psb28 and Psb34). The N-terminus of Psb34 (this protein) binds to CP47 (psbB) in close proximity to PsbH on the cytoplasmic face of PSII.

The protein resides in the cellular thylakoid membrane. In terms of biological role, involved in photosystem II (PSII) assembly and/or repair, probably in conversion of late PSII assembly intermediates into mature dimeric PSII. This Thermosynechococcus vestitus (strain NIES-2133 / IAM M-273 / BP-1) protein is Photosystem II assembly protein Psb34.